Reading from the N-terminus, the 388-residue chain is Small ribosomal subunit protein uS3m (388 aa).

This sequence belongs to the universal ribosomal protein uS3 family.

Its subcellular location is the mitochondrion. Essential for mitochondrial protein synthesis and required for the maturation of small ribosomal subunits. The polypeptide is Small ribosomal subunit protein uS3m (VAR1) (Kluyveromyces lactis (strain ATCC 8585 / CBS 2359 / DSM 70799 / NBRC 1267 / NRRL Y-1140 / WM37) (Yeast)).